The chain runs to 113 residues: U11-theraphotoxin-Hhn1s (113 aa).

The N-terminal stretch at 1–21 (MNTVRVTFLLVFVLAVSLGQA) is a signal peptide. Residues 22–74 (DKDENRMEMQEKTEQGKSYLDFAENLLLQKLEELEAKLLEEDSEESRNSRQKR) constitute a propeptide that is removed on maturation. The interval 61 to 83 (EEDSEESRNSRQKRCIGEGVPCD) is disordered. 3 cysteine pairs are disulfide-bonded: cysteine 75-cysteine 90, cysteine 82-cysteine 95, and cysteine 89-cysteine 110.

This sequence belongs to the neurotoxin 14 (magi-1) family. 01 (HNTX-16) subfamily. Expressed by the venom gland.

The protein localises to the secreted. Functionally, probable ion channel inhibitor. The chain is U11-theraphotoxin-Hhn1s from Cyriopagopus hainanus (Chinese bird spider).